The chain runs to 102 residues: Serum amyloid A-5 protein (102 aa).

Residues 68–102 (GRGHEDSMADQEANRWGRSGNDPNHYRPAGLPDKY) form a disordered region. Residues 69 to 82 (RGHEDSMADQEANR) show a composition bias toward basic and acidic residues.

This sequence belongs to the SAA family. In terms of tissue distribution, expressed by the liver; secreted in plasma.

It localises to the secreted. In terms of biological role, major acute phase reactant. Apolipoprotein of the HDL complex. This Mesocricetus auratus (Golden hamster) protein is Serum amyloid A-5 protein.